The sequence spans 149 residues: UPF0179 protein MA_3685 (149 aa).

It belongs to the UPF0179 family.

The chain is UPF0179 protein MA_3685 from Methanosarcina acetivorans (strain ATCC 35395 / DSM 2834 / JCM 12185 / C2A).